The sequence spans 956 residues: MENVRFSIIENDLKWNSESDPTADVDLLLDKRSISSEANSAGVFSDEAHEIFARQQQNQILWDLDEVKETLTESPGGKHVVDMVQSGCFLELMTDSADCNLALICCSVFGSVENTLFLLKHYNADPNVADSRGRTPLHFACCRANAPIAKVLLDFGADPNRWDARKEVTSLHCAASSKSVECILLLLRRKASINIGIEKRSALHYAIDVNAVDCVEILLKYGADPNTPQVYTETPLHTASAAGFAKCVQLLLSHNADVRSQFGEGKVTALHLAAENDYVECARLLLEHRAEVDCRNASHQTPLHLACLSQSIGTVDLLISYGANVNAVYRDGRTALHAAIVKQSRSLDCCNALLKAGADVNKADNYGYTPLHIAALNEFSSCVYTFIEHGADITARTDGRVSALSFIVRRTPEIIPKLMQKLDSSIKANDQEIGDVDCQIKLDFRLLVPSSSMDRGETELLLSLIEVGQKRILMHPLCETFLFLKWRRIRKFFLMSLAYHTLFVILFTFYVIWVYVRCCKKEELCVAPGYVSTIGYLVIILNLILLGKEVFQMAHGLRGYAKYWENWLQWTIGTGVLLCVTPETVRTDDLTAVPVWQHHVAAIVILLVWLELMMLVGRFPIFGVYVQMFTKVAVNFAKFLLAYICLLVAFGLSFAVLFNDYPAFENITWSFLKSITMMSGELEFEDIFYGDYAVKFPVTAHIIFLSFVLLVTVILTNLMVGLAVSDIQGLQVSATLDRLVRQAELVSRLESLFFSRLLRSAPTNLIQLCKRSALLRTSRDKLQFTIRPNDPRDNQLPEDIKLNVYKLVAERRDRNQSLRRRQFENNYNIFSRSLQRQQQPLHTDFLKPEPATGTTKKTPQNLFHMHELLRPRSATNVPQQFRQEAEGTVQMKNQANVLSAVLAEVQAIKTQLVDLVAKFERFSENATRKLNYSTDELCRLRQQGQSVASSHIRRHR.

The Cytoplasmic portion of the chain corresponds to 1–491 (MENVRFSIIE…LFLKWRRIRK (491 aa)). ANK repeat units lie at residues 132–161 (RGRTPLHFACCRANAPIAKVLLDFGADPNR), 166–195 (KEVTSLHCAASSKSVECILLLLRRKASINI), 198–227 (EKRSALHYAIDVNAVDCVEILLKYGADPNT), 231–260 (YTETPLHTASAAGFAKCVQLLLSHNADVRS), 265–294 (GKVTALHLAAENDYVECARLLLEHRAEVDC), 298–327 (SHQTPLHLACLSQSIGTVDLLISYGANVNA), 331–362 (DGRTALHAAIVKQSRSLDCCNALLKAGADVNK), and 366–395 (YGYTPLHIAALNEFSSCVYTFIEHGADITA). The chain crosses the membrane as a helical span at residues 492–512 (FFLMSLAYHTLFVILFTFYVI). The Extracellular segment spans residues 513–525 (WVYVRCCKKEELC). A helical membrane pass occupies residues 526–546 (VAPGYVSTIGYLVIILNLILL). Residues 547 to 565 (GKEVFQMAHGLRGYAKYWE) are Cytoplasmic-facing. The helical transmembrane segment at 566–584 (NWLQWTIGTGVLLCVTPET) threads the bilayer. The Extracellular segment spans residues 585 to 601 (VRTDDLTAVPVWQHHVA). Residues 602–622 (AIVILLVWLELMMLVGRFPIF) form a helical membrane-spanning segment. Topologically, residues 623–638 (GVYVQMFTKVAVNFAK) are cytoplasmic. Residues 639 to 659 (FLLAYICLLVAFGLSFAVLFN) traverse the membrane as a helical segment. At 660-701 (DYPAFENITWSFLKSITMMSGELEFEDIFYGDYAVKFPVTAH) the chain is on the extracellular side. An N-linked (GlcNAc...) asparagine glycan is attached at Asn-666. The chain crosses the membrane as a helical span at residues 702–722 (IIFLSFVLLVTVILTNLMVGL). Over 723 to 956 (AVSDIQGLQV…VASSHIRRHR (234 aa)) the chain is Cytoplasmic.

Belongs to the transient receptor (TC 1.A.4) family. STrpC subfamily. Homooligomer; between isoform A and isoform B. Expressed in various peripheral nerves and the central nerves in embryos. In adults, it is expressed in sensory neurons lying beneath the bristles around eyes, neurons innervating the bristles on the back of thorax and neurons in maxillary palps, proboscis and antennae. Expressed in multidendritic neurons, which mediate temperature sensing, as well as non-multidendritic neurons in larval epidermis. Localizes ubiquitously throughout neurites.

It localises to the membrane. In terms of biological role, receptor-activated non-selective cation channel involved in protection or tolerance from high temperature stress. Activated by temperatures above 40 degrees Celsius. More permeable to K(+) than to Na(+). May act in stress protection allow flies to survive in natural environments. The polypeptide is Transient receptor potential channel pyrexia (pyx) (Drosophila melanogaster (Fruit fly)).